A 327-amino-acid chain; its full sequence is Serine/threonine-protein phosphatase PP1-beta catalytic subunit (327 aa).

A2 carries the N-acetylalanine modification. D63, H65, D91, and N123 together coordinate Mn(2+). H124 functions as the Proton donor in the catalytic mechanism. 2 residues coordinate Mn(2+): H172 and H247. The disordered stretch occupies residues 305-327 (QYGGLNSGRPVTPPRTANPPKKR). T316 is subject to Phosphothreonine.

This sequence belongs to the PPP phosphatase family. PP-1 subfamily. As to quaternary structure, PP1 comprises a catalytic subunit, PPP1CA, PPP1CB or PPP1CC, which is folded into its native form by inhibitor 2 and glycogen synthetase kinase 3, and then complexed to one or several targeting or regulatory subunits. The targeting or regulatory subunits determine the substrate specificity of PP1. PPP1R12A, PPP1R12B and PPP1R12C mediate binding to myosin. PPP1R3A (in skeletal muscle), PPP1R3B (in liver), PPP1R3C, PPP1R3D and PPP1R3F (in brain) mediate binding to glycogen. PPP1R15A and PPP1R15B mediate binding to EIF2S1. Part of a complex containing PPP1R15B, PP1 and NCK1/2. Interacts with PPP1R7 and PPP1R12C. Interacts with PPP1R16B. Component of the PTW/PP1 phosphatase complex, composed of PPP1R10/PNUTS, TOX4, WDR82, and PPP1CA or PPP1CB or PPP1CC. Interacts with PPP1R8. Interacts with PPP1R12A and NUAK1; the interaction is direct. Interacts with TRIM28; the interaction is weak. Interacts with FOXP3. Interacts with RRP1B. Interacts with SERPINE1. Interacts with LZTR1. Component of the SHOC2-MRAS-PP1c (SMP) complex consisting of SHOC2, GTP-bound M-Ras/MRAS and the catalytic subunit of protein phosphatase 1 (either PPP1CA, PPP1CB or PPP1CC). SHOC2 and PP1c preferably bind M-Ras/MRAS, but they also bind K-Ras/KRAS, N-Ras/NRAS and H-Ras/HRAS; these interactions are GTP-dependent and both SHOC2 and PP1c are required to form a stable complex. Interacts with SHOC2 in the absence of Ras GTPases. Mn(2+) serves as cofactor.

The protein resides in the cytoplasm. The protein localises to the nucleus. Its subcellular location is the nucleoplasm. It localises to the nucleolus. It carries out the reaction O-phospho-L-seryl-[protein] + H2O = L-seryl-[protein] + phosphate. The enzyme catalyses O-phospho-L-threonyl-[protein] + H2O = L-threonyl-[protein] + phosphate. The catalysed reaction is O-phospho-L-seryl-[myosin light chain] + H2O = L-seryl-[myosin light chain] + phosphate. It catalyses the reaction O-phospho-L-threonyl-[myosin light chain] + H2O = L-threonyl-[myosin light chain] + phosphate. Its activity is regulated as follows. Inhibited by the toxins okadaic acid, tautomycin and microcystin Leu-Arg. The phosphatase activity of the PPP1R15A-PP1 complex toward EIF2S1 is specifically inhibited by Salubrinal, a drug that protects cells from endoplasmic reticulum stress. In terms of biological role, protein phosphatase that associates with over 200 regulatory proteins to form highly specific holoenzymes which dephosphorylate hundreds of biological targets. Protein phosphatase (PP1) is essential for cell division, it participates in the regulation of glycogen metabolism, muscle contractility and protein synthesis. Involved in regulation of ionic conductances and long-term synaptic plasticity. Component of the PTW/PP1 phosphatase complex, which plays a role in the control of chromatin structure and cell cycle progression during the transition from mitosis into interphase. In balance with CSNK1D and CSNK1E, determines the circadian period length, through the regulation of the speed and rhythmicity of PER1 and PER2 phosphorylation. May dephosphorylate CSNK1D and CSNK1E. Core component of the SHOC2-MRAS-PP1c (SMP) holophosphatase complex that regulates the MAPK pathway activation. The SMP complex specifically dephosphorylates the inhibitory phosphorylation at 'Ser-259' of RAF1 kinase, 'Ser-365' of BRAF kinase and 'Ser-214' of ARAF kinase, stimulating their kinase activities. The SMP complex enhances the dephosphorylation activity and substrate specificity of PP1c. The sequence is that of Serine/threonine-protein phosphatase PP1-beta catalytic subunit (PPP1CB) from Bos taurus (Bovine).